The following is a 585-amino-acid chain: GRR1-like protein 1 (585 aa).

Residues 1–48 (MGLRFPPKVLEHILSFIDSNEDRNSVSLVCKSWFETERKTRKRVFVGN) form the F-box domain. Residue Lys-70 participates in 1D-myo-inositol hexakisphosphate binding. The interval 77 to 78 (DY) is interaction with auxin-responsive proteins. 1D-myo-inositol hexakisphosphate is bound by residues 109-110 (KR) and Arg-340. The interval 343–348 (PSEPDL) is interaction with auxin-responsive proteins. Residue 397-399 (CFR) coordinates 1D-myo-inositol hexakisphosphate. The segment at 401-405 (CVIEP) is interaction with auxin-responsive proteins. Residue Arg-432 participates in 1D-myo-inositol hexakisphosphate binding. The tract at residues 460 to 461 (AF) is interaction with auxin-responsive proteins. Residues 480–481 (KK) and Arg-505 contribute to the 1D-myo-inositol hexakisphosphate site.

As to quaternary structure, part of a SCF (SKP1-cullin-F-box) protein ligase complex. Interacts with CUL1, SKP1A/ASK1 and SKP1B/ASK2. Interacts with Aux/IAA proteins (IAA7 and IAA12) in an auxin-dependent manner. In terms of tissue distribution, ubiquitous.

The protein resides in the nucleus. The protein operates within protein modification; protein ubiquitination. In terms of biological role, component of SCF(ASK-cullin-F-box) E3 ubiquitin ligase complexes, which may mediate the ubiquitination and subsequent proteasomal degradation of target proteins. Auxin receptor that mediates Aux/IAA proteins proteasomal degradation and auxin-regulated transcription. Involved in embryogenesis regulation by auxin. Confers sensitivity to the virulent bacterial pathogen P.syringae. Mediates glucose repression in yeast. In Arabidopsis thaliana (Mouse-ear cress), this protein is GRR1-like protein 1 (GRH1).